The sequence spans 33 residues: DELTA-pseudomyrmecitoxin-Pp1a subunit B (33 aa).

Heterodimer composed of subunit A and subunit B (DELTA-PSDTX-Pp1a); disulfide-linked. As to expression, expressed by the venom gland.

The protein resides in the secreted. Functionally, this heterodimer has insecticidal and cytotoxic properties. Induces immediate paralysis when injected into blowflies (Lucilia cuprina), and then death within 24 hours. Also inhibits the growth of Aedes albopictus mosquito C6/36 cells. The sequence is that of DELTA-pseudomyrmecitoxin-Pp1a subunit B from Pseudomyrmex penetrator (Ant).